Consider the following 284-residue polypeptide: Protein SIC1 (284 aa).

The segment at 1–89 (MTPSTPPRSR…SPFPKSSVKR (89 aa)) is disordered. Thr-5 carries the post-translational modification Phosphothreonine; by PHO85. 2 stretches are compositionally biased toward polar residues: residues 18–52 (PSGNTSSSALMQGQKTPQKPSQNLVPVTPSTTKSF) and 61–79 (PNSNMGMTSPFNGLTSPQR). Position 33 is a phosphothreonine (Thr-33). Residue Ser-76 is modified to Phosphoserine. Thr-173 is modified (phosphothreonine). Ser-198 and Ser-201 each carry phosphoserine. Lysine derivative occurs at positions 268, 272, and 274.

In terms of assembly, interacts with HOG1. Post-translationally, phosphorylated by cyclin-dependent kinases CDC28 and PHO85 in association with G1-cyclins, promoting degradation of SIC1 and exit form G1. In terms of processing, may contain a covalently attached chromophore. The N-terminus is blocked.

Its subcellular location is the cytoplasm. The protein resides in the nucleus. Its function is as follows. Substrate and inhibitor of the cyclin-dependent protein kinase CDC28. Its activity could be important for faithful segregation of chromosomes to daughter cells. It acts in response to a signal from a post-start checkpoint. The chain is Protein SIC1 (SIC1) from Saccharomyces cerevisiae (strain ATCC 204508 / S288c) (Baker's yeast).